A 338-amino-acid chain; its full sequence is Phosphatidylinositol:ceramide inositolphosphotransferase (338 aa).

At 1 to 36 the chain is on the cytoplasmic side; that stretch reads MTSHVTAHDVGGNEDIGTDHVPWYKQPLPLCTQVMR. A helical transmembrane segment spans residues 37–57; it reads FILLLLLTVMFLGVAILVANA. The Extracellular segment spans residues 58-87; that stretch reads RMPDPEKVRPLPDLLLESIPKVALLENGTN. The chain crosses the membrane as a helical span at residues 88-108; that stretch reads VIIFLLNATTVVVGFKVFLLE. Residues 109–116 lie on the Cytoplasmic side of the membrane; sequence RHMNGLPR. A helical membrane pass occupies residues 117–137; it reads VTFLVGVPKIGSFLNRMAFGV. The Extracellular segment spans residues 138–152; it reads LDSGRRPFPLKNVFP. A helical transmembrane segment spans residues 153-173; it reads IMAIRFLTSYAVVMVFRAFVI. Residues 174 to 189 lie on the Cytoplasmic side of the membrane; the sequence is MGTSYPATDNHCQNPQ. Residues 190–210 traverse the membrane as a helical segment; it reads VIEHPVLNVILTLVTLGSGAI. Residues 211–222 lie on the Extracellular side of the membrane; that stretch reads HCGDLMFSGHTM. His220 is a catalytic residue. The helical transmembrane segment at 223–243 threads the bilayer; that stretch reads ILSLAFILAWDYSPFLHPWAV. Residues 244-338 lie on the Cytoplasmic side of the membrane; that stretch reads RVWVSVLLPI…TDASAALPEH (95 aa). Active-site residues include His264 and Asp268.

This sequence belongs to the sphingomyelin synthase family.

It localises to the membrane. Functionally, bidirectional lipid inositolphosphotransferase capable of converting phosphatidylinositol (PI) and ceramide to inositol-phosphorylceramide (IPC) and diacylglycerol (DAG) and vice versa. Direction is dependent on the relative concentrations of DAG and ceramide as phosphoinositol acceptors. Essential for viability of the pathogenic bloodstream stage of this human protozoan parasite and, consequently, can be considered as potential drug target. This chain is Phosphatidylinositol:ceramide inositolphosphotransferase, found in Leishmania major.